Here is a 613-residue protein sequence, read N- to C-terminus: Zinc finger protein 665 (613 aa).

18 consecutive C2H2-type zinc fingers follow at residues 113 to 135, 141 to 163, 169 to 191, 197 to 219, 225 to 247, 253 to 275, 281 to 303, 309 to 331, 337 to 359, 365 to 387, 393 to 415, 421 to 443, 449 to 471, 477 to 499, 505 to 527, 533 to 555, 561 to 583, and 589 to 611; these read YKCDECGKVFNQNSRLTSHKRIH, YRCNECGKAFTVRSNLTIHQVIH, YKCNECGKVFSQPSNLAGHQRIH, YKCNECGKAFRAHSKLTTHQVIH, YKCNECGKCFTQNSHLASHRRIH, YKCNECGKAFSVRSSLTTHQTIH, YKCNECGKVFRHNSYLTKHRRVH, YKCNECGKAFSMHSNLTKHQIIH, FKCNECVKVFTQYSHLANHRRIH, YRCDECGKAFSVRSSLTTHQAIH, YKCNDCGKVFTQNSHLASHRGIH, YKCDECGKAFSQTSQLARHWRVH, YKCNECGKAFSVHSSLTTHQTIH, YKCNDCGKVFRHNSYLAVHQRIH, YKCNECGKAFSVHSNLATHQVIH, YKCNECGKVFTQNSHLANHRRIH, YRCNECGKAFSVRSTLTTHMAIH, and YKCNECGKVFTQNSNLAKHRRIH.

The protein belongs to the krueppel C2H2-type zinc-finger protein family.

It is found in the nucleus. Its function is as follows. May be involved in transcriptional regulation. In Pongo abelii (Sumatran orangutan), this protein is Zinc finger protein 665 (ZNF665).